We begin with the raw amino-acid sequence, 55 residues long: ATP synthase protein 8 (55 aa).

The chain crosses the membrane as a helical span at residues 11–31 (LIMFSVTLMLLIVLVINHFML).

The protein belongs to the ATPase protein 8 family. In terms of assembly, F-type ATPases have 2 components, CF(1) - the catalytic core - and CF(0) - the membrane proton channel.

The protein resides in the mitochondrion membrane. Functionally, mitochondrial membrane ATP synthase (F(1)F(0) ATP synthase or Complex V) produces ATP from ADP in the presence of a proton gradient across the membrane which is generated by electron transport complexes of the respiratory chain. F-type ATPases consist of two structural domains, F(1) - containing the extramembraneous catalytic core and F(0) - containing the membrane proton channel, linked together by a central stalk and a peripheral stalk. During catalysis, ATP synthesis in the catalytic domain of F(1) is coupled via a rotary mechanism of the central stalk subunits to proton translocation. Part of the complex F(0) domain. Minor subunit located with subunit a in the membrane. The chain is ATP synthase protein 8 (MT-ATP8) from Albinaria caerulea (Land snail).